The primary structure comprises 1354 residues: Enhancer of mRNA-decapping protein 4 homolog (1354 aa).

The disordered stretch occupies residues 18-38; the sequence is PLSASSSPPPSVHRSPRCGKA. Ser-32 carries the post-translational modification Phosphoserine. WD repeat units follow at residues 309 to 348 and 363 to 406; these read EEDS…VRNH and CSLF…CLQT. Residues 552-581 form a disordered region; that stretch reads ERSSLNSKRSQTPEDNLLIKEEPESPNSGT. Over residues 554–565 the composition is skewed to polar residues; that stretch reads SSLNSKRSQTPE. Ser-561 carries the post-translational modification Phosphoserine. Residue Thr-563 is modified to Phosphothreonine. At Ser-576 the chain carries Phosphoserine. Thr-581 carries the phosphothreonine modification. 3 positions are modified to phosphoserine: Ser-759, Ser-762, and Ser-763. Residues 765 to 803 are a coiled coil; it reads SREVQEIMATQDDADAYEAELENLDDDDDDEEEELANSS. Acidic residues predominate over residues 788–799; sequence LDDDDDDEEEEL. Disordered stretches follow at residues 788–811 and 838–884; these read LDDD…AVDG and NTNN…AGGT. Over residues 853–884 the composition is skewed to low complexity; the sequence is NNNTSVGSNSNNNTATTLSTSNTSSSNNAGGT. 3 coiled-coil regions span residues 893-936, 969-1036, and 1159-1188; these read ELNA…HSKQ, NEHK…QAQM, and KHRT…QVQE. Ser-1207 carries the post-translational modification Phosphoserine. 2 positions are modified to phosphothreonine: Thr-1211 and Thr-1317. Tyr-1320 carries the phosphotyrosine modification.

It belongs to the WD repeat EDC4 family. As to quaternary structure, homodimer. Interacts with Dcp1 and Dcp2. Interacts with Gyf.

It localises to the cytoplasm. Its subcellular location is the P-body. Functionally, in the process of mRNA degradation, seems to play a role in mRNA decapping. Required for silencing a subset of endogenous miRNA targets. The chain is Enhancer of mRNA-decapping protein 4 homolog (Ge-1) from Drosophila melanogaster (Fruit fly).